The chain runs to 239 residues: 7-cyano-7-deazaguanine synthase (239 aa).

13-23 (FSGGQDSTTCL) lines the ATP pocket. The Zn(2+) site is built by C201, C216, C219, and C222.

The protein belongs to the QueC family. Requires Zn(2+) as cofactor.

It catalyses the reaction 7-carboxy-7-deazaguanine + NH4(+) + ATP = 7-cyano-7-deazaguanine + ADP + phosphate + H2O + H(+). Its pathway is purine metabolism; 7-cyano-7-deazaguanine biosynthesis. In terms of biological role, catalyzes the ATP-dependent conversion of 7-carboxy-7-deazaguanine (CDG) to 7-cyano-7-deazaguanine (preQ(0)). The chain is 7-cyano-7-deazaguanine synthase from Bradyrhizobium sp. (strain BTAi1 / ATCC BAA-1182).